The chain runs to 386 residues: ATP phosphoribosyltransferase regulatory subunit (386 aa).

The protein belongs to the class-II aminoacyl-tRNA synthetase family. HisZ subfamily. As to quaternary structure, heteromultimer composed of HisG and HisZ subunits.

It localises to the cytoplasm. It participates in amino-acid biosynthesis; L-histidine biosynthesis; L-histidine from 5-phospho-alpha-D-ribose 1-diphosphate: step 1/9. Functionally, required for the first step of histidine biosynthesis. May allow the feedback regulation of ATP phosphoribosyltransferase activity by histidine. This chain is ATP phosphoribosyltransferase regulatory subunit, found in Rhodospirillum centenum (strain ATCC 51521 / SW).